The chain runs to 2094 residues: MVKIGSDTLAPKQLVLENKYIAACLSKPANFALSFLAQGASLKPSVVARAAINGVIACDTTTFQLLAMDGTPLSFAAAAVVVRQFQLAHNRFVKIGLRQFYKECTRRCNAFNLQKAARQSRERRAACKRILASLDADLPCSRSSRRAIVTAHYAGVATAARKSALFRQMRADKRASRALAAAMQPLVLAPPTCARIPYVCPLSSSVEESVSRRSLERCSKRVPREHASPRVASEMQPFADRPRLFSRVLLLPLSEITRAFFSRVFVPGSAMYDCATDLAHVVLDWWSITPMAHYLAMLDNFLGTPTEESVRQASTNLLEEVEAMRALCRDHRANGVFAWVTETAGTIGSTLKTAAVAPFHGAGVALKAVLTPCASATLAWGEKFFQTLKSKFFEFLKPYIQHAIYASAEIEKYWAFIHGWATKMWNNVGVELQALGDAAWWAIGITMVCGIVTLVEKLLVYLGALNAGGILCSLMLTGLLGAAGLLATGKFAEASSTLVGAMRSLIFTLFGSWKPTEASDGLTCNANALDFPLKVLETVGTGLISAPLGTLQYIGKYGQAMDQIRKGKDAIKEFVGFCMDRVADAWDYMTGRKDSFLREIASAAKVDIVYWIKQTQSVLLQAQTIAVTDIVLLDTVTHLLYKGQILQLTLAKASRTTSLDYARIVSTLIGELTKIRATCARAGSFDGRRPEPFWCYIYGKSHCGKSLFMEDVSRALLKENGHAPNDIYAKNARDSFWSGYLQHACVQVDDLSACVTRPSLESEFLQLVGSKMYSLNMAAVEDKGMSFNSSIIVTTANVYTAPTSAEITDKDAYGNRRNVVVQCRAAPDVEFDPRNPSASCEARLVHRTDESPLGNGQWRNCSAVLEDIIHHAAIHRNKENLLMENYRERSDTQHPVFVGAKSFIHRLAKEKNFAHIVCDDVLYYHDSYIDSTRVSEGTINIGMEDACIQSVVQWSELVGGVKDLGLLYAFVHAFTEGPCHVDSVEALNSEATSCQRDFFQSLSLLERIYMRLVQKQLDRIRANPDFLFSVDIKTRILQSFRHGYDEMITHGGKVLAIFAALLLVLLLYSSFFALYQTFVAGTSSALVSAGMITQLSANAGSVCTSASNPSGAASYVSSNIPIHHRWRSNYSERSYALNSNLEDKYLLDLLVWLQIPGDSIISCIRFKGRSLLLTKHQALAIPEGARVYCNYYGRGRAVQTIPLSWSYKKVREFADTEAVLFLDAQLSTMPAGREHYFNVPVERLPSVFDMNGVVMKQKRYMTDSDDSLAAFTPNQPVVNTWENSRAKLNCERQGINTFAYGGNYRNELPRSISSNCNTSPEDCGAIMTMIFEGRRVVVGMHVASGKNPQGRYMSTACLLPDYHEDLSLNSMLQYTPYDGICKEGYRQIGNIENIGARPYTSGKTAFVAVPQHLLYSPPVLQEKLPGSAQPVTIQVEVKQPAILSKDDPRIPEGTSYDPLIDGMAKFSHPMAVLDENVCNEVAQDIVESWHDCFQDLQDVSDEIAINGSTEMDYEPFNLQSSEGYPYVTQRKPGESGKIRFFEMDPYTGLKSLIPNTLPAMRYEALQRDCFTSVPEMVCIETPKDECLPLRKICIKPKTRLFSILPLEFNLLLRKKFLHFSSSLQMHRDTLPTQVGVNPYSREWGELLQRLRAQSSVAINCDYASFDGLLTGQILEKIGTMINKMYIGSEASKIQRLNLLMSIVNRKSICGARVYEVRAGIPSGCALTVLLNSIFNEFLIRFVWRTTIIGVPRERFSQYVTLLIYGDDNLIAVHPDYLPHFNGEIIRTRLADVNVIITDGSDKTAEKIEEKPLVQLDFLKRRFRKLNDGTVYAPLDLASVYTSLQNVTMGAGSIHIALQNNVHNALLELYLHGNETWFNHLRDFYRKSHAWVNLPSWREAFAFHQGQISGVTPWTPYQMFDVPVDGGRLRAMMANQGEAAFSTHLGREIYICGPKWCVSDPEHQFVVSTTPLRSADRGSGIHRAIEYPCNGVGRLPSQDWVTKFKSSAHRVTAEIRKAHASGKAIYFRDDPPYVANWCAAIGFAQGLGYDYKSMINLYHDVSVPGSDALYFYFEQRARRALPEPYIPPHLRTRVR.

Topologically, residues Cys-524 to Lys-1053 are cytoplasmic. An SF3 helicase domain is found at Leu-672 to Ala-838. Residue Gly-699–Ser-706 coordinates ATP. Residues Val-1054–Leu-1074 form a helical membrane-spanning segment. At Tyr-1075–Ser-1105 the chain is on the lumenal side. An N-linked (GlcNAc...) asparagine; by host glycan is attached at Asn-1129. The Peptidase C3 domain occupies Ala-1136–Leu-1366. Catalysis depends on for picornain 3C-like protease activity residues His-1176, Glu-1217, and Cys-1323. In terms of domain architecture, RdRp catalytic spans Ser-1655–Phe-1780.

The protein belongs to the nepoviruses RNA1 polyprotein family. In terms of processing, specific enzymatic cleavages by picornain 3C-like protease in vivo yield mature proteins. Picornain 3C-like protease is autocatalytically processed. NTB exists as NTB-VPg polyprotein as well as NTB mature protein. VPg is uridylylated by the polymerase and is covalently linked to the 5'-end of genomic RNA. This uridylylated form acts as a nucleotide-peptide primer for the polymerase.

The protein resides in the host endoplasmic reticulum lumen. Its subcellular location is the host endoplasmic reticulum membrane. The catalysed reaction is RNA(n) + a ribonucleoside 5'-triphosphate = RNA(n+1) + diphosphate. In terms of biological role, picornain 3C-like protease is a thiol protease that cleaves at Gln-|-Gly or Gln-|-Ser sites in the P1 and P2 polyproteins. Functionally, the VPg-NTB polyprotein may act as a membrane-anchor for the replication complex. The chain is RNA1 polyprotein from Blackcurrant reversion association virus (BRAV).